The chain runs to 632 residues: Tetratricopeptide repeat protein 39B (632 aa).

TPR repeat units follow at residues 343 to 376 (SLVL…QEEW), 535 to 568 (CLVK…EKLL), and 576 to 609 (PFTL…YKDY).

Belongs to the TTC39 family.

Functionally, regulates high density lipoprotein (HDL) cholesterol metabolism by promoting the ubiquitination and degradation of the oxysterols receptors LXR (NR1H2 and NR1H3). The polypeptide is Tetratricopeptide repeat protein 39B (TTC39B) (Macaca fascicularis (Crab-eating macaque)).